The chain runs to 690 residues: Protein arginine N-methyltransferase 7 (690 aa).

SAM-dependent MTase PRMT-type domains are found at residues 14–357 and 366–690; these read QNSW…YSLW and TKSV…QKKL.

The protein belongs to the class I-like SAM-binding methyltransferase superfamily. Protein arginine N-methyltransferase family. PRMT7 subfamily. Expressed at low level in ovary.

In terms of biological role, essential arginine methyltransferase that can both catalyze the formation of omega-N monomethylarginine (MMA) and symmetrical dimethylarginine (sDMA). Specifically mediates the symmetrical dimethylation of arginine residues in the small nuclear ribonucleoproteins SmD1 and SmD3. The polypeptide is Protein arginine N-methyltransferase 7 (Art7) (Drosophila melanogaster (Fruit fly)).